Consider the following 485-residue polypeptide: Sulfate adenylyltransferase subunit 1 (485 aa).

The tr-type G domain maps to 17 to 232 (KDLLRLLTAG…LETVHIDNDH (216 aa)). Residues 26–33 (GSVDDGKS) are G1. 26 to 33 (GSVDDGKS) lines the GTP pocket. The segment at 84–88 (GITID) is G2. Residues 105 to 108 (DTPG) are G3. GTP contacts are provided by residues 105–109 (DTPGH) and 160–163 (NKMD). Positions 160–163 (NKMD) are G4. Residues 197 to 199 (SAL) are G5.

Belongs to the TRAFAC class translation factor GTPase superfamily. Classic translation factor GTPase family. CysN/NodQ subfamily. In terms of assembly, heterodimer composed of CysD, the smaller subunit, and CysN.

It catalyses the reaction sulfate + ATP + H(+) = adenosine 5'-phosphosulfate + diphosphate. The protein operates within sulfur metabolism; hydrogen sulfide biosynthesis; sulfite from sulfate: step 1/3. In terms of biological role, with CysD forms the ATP sulfurylase (ATPS) that catalyzes the adenylation of sulfate producing adenosine 5'-phosphosulfate (APS) and diphosphate, the first enzymatic step in sulfur assimilation pathway. APS synthesis involves the formation of a high-energy phosphoric-sulfuric acid anhydride bond driven by GTP hydrolysis by CysN coupled to ATP hydrolysis by CysD. This Bacteroides thetaiotaomicron (strain ATCC 29148 / DSM 2079 / JCM 5827 / CCUG 10774 / NCTC 10582 / VPI-5482 / E50) protein is Sulfate adenylyltransferase subunit 1.